The sequence spans 618 residues: Dihydroxy-acid dehydratase (618 aa).

Asp81 is a binding site for Mg(2+). Cys122 contacts [2Fe-2S] cluster. Mg(2+) is bound by residues Asp123 and Lys124. N6-carboxylysine is present on Lys124. [2Fe-2S] cluster is bound at residue Cys195. Glu491 lines the Mg(2+) pocket. Catalysis depends on Ser517, which acts as the Proton acceptor.

The protein belongs to the IlvD/Edd family. Homodimer. [2Fe-2S] cluster is required as a cofactor. The cofactor is Mg(2+).

The enzyme catalyses (2R)-2,3-dihydroxy-3-methylbutanoate = 3-methyl-2-oxobutanoate + H2O. The catalysed reaction is (2R,3R)-2,3-dihydroxy-3-methylpentanoate = (S)-3-methyl-2-oxopentanoate + H2O. It participates in amino-acid biosynthesis; L-isoleucine biosynthesis; L-isoleucine from 2-oxobutanoate: step 3/4. Its pathway is amino-acid biosynthesis; L-valine biosynthesis; L-valine from pyruvate: step 3/4. In terms of biological role, functions in the biosynthesis of branched-chain amino acids. Catalyzes the dehydration of (2R,3R)-2,3-dihydroxy-3-methylpentanoate (2,3-dihydroxy-3-methylvalerate) into 2-oxo-3-methylpentanoate (2-oxo-3-methylvalerate) and of (2R)-2,3-dihydroxy-3-methylbutanoate (2,3-dihydroxyisovalerate) into 2-oxo-3-methylbutanoate (2-oxoisovalerate), the penultimate precursor to L-isoleucine and L-valine, respectively. This is Dihydroxy-acid dehydratase from Dechloromonas aromatica (strain RCB).